The chain runs to 561 residues: Potassium-transporting ATPase potassium-binding subunit (561 aa).

Helical transmembrane passes span 1 to 21, 62 to 82, 132 to 152, 173 to 193, 253 to 273, 283 to 303, 327 to 347, 356 to 376, 379 to 399, 416 to 436, 483 to 503, and 526 to 546; these read MMASASLLIGSYLLLLMLLAR, YLLAILLFNAAGLLLLLLILM, GLTVQNFLSAATGIAVAFALM, ITLYVLLPLSLLMALFLVSQG, FVQMLAIFLIPAALCFAFGDV, LLWSMSLMFVAAVVVVMWAEV, FGILNSSLFAVITTAASCGAV, ALGGMVPMWLMQIGEVVFGGV, GLYGMLLFVLLAVFIAGLMIG, MTALAILVTPVLVLLGAALAM, MLLAFCMLVGRFGIIVPVLAI, and LFIALLIGTVMLVGALTFIPA.

This sequence belongs to the KdpA family. The system is composed of three essential subunits: KdpA, KdpB and KdpC.

Its subcellular location is the cell inner membrane. Functionally, part of the high-affinity ATP-driven potassium transport (or Kdp) system, which catalyzes the hydrolysis of ATP coupled with the electrogenic transport of potassium into the cytoplasm. This subunit binds the periplasmic potassium ions and delivers the ions to the membrane domain of KdpB through an intramembrane tunnel. In Erwinia tasmaniensis (strain DSM 17950 / CFBP 7177 / CIP 109463 / NCPPB 4357 / Et1/99), this protein is Potassium-transporting ATPase potassium-binding subunit.